A 677-amino-acid chain; its full sequence is UvrABC system protein B (677 aa).

Positions 26–414 (DNLDAGLAHQ…SGNEVVEQVV (389 aa)) constitute a Helicase ATP-binding domain. Residue 39–46 (GVTGSGKT) coordinates ATP. Residues 92 to 115 (YYDYYQPEAYVPTTDTFIEKDASI) carry the Beta-hairpin motif. In terms of domain architecture, Helicase C-terminal spans 432 to 598 (QVDDLMSEIR…GLNKDITDVM (167 aa)). Residues 637-672 (MKEIDAKEKEMYKAAQNLEFEQAGKLRDEVAELREQ) enclose the UVR domain.

It belongs to the UvrB family. In terms of assembly, forms a heterotetramer with UvrA during the search for lesions. Interacts with UvrC in an incision complex.

It localises to the cytoplasm. The UvrABC repair system catalyzes the recognition and processing of DNA lesions. A damage recognition complex composed of 2 UvrA and 2 UvrB subunits scans DNA for abnormalities. Upon binding of the UvrA(2)B(2) complex to a putative damaged site, the DNA wraps around one UvrB monomer. DNA wrap is dependent on ATP binding by UvrB and probably causes local melting of the DNA helix, facilitating insertion of UvrB beta-hairpin between the DNA strands. Then UvrB probes one DNA strand for the presence of a lesion. If a lesion is found the UvrA subunits dissociate and the UvrB-DNA preincision complex is formed. This complex is subsequently bound by UvrC and the second UvrB is released. If no lesion is found, the DNA wraps around the other UvrB subunit that will check the other stand for damage. The polypeptide is UvrABC system protein B (Idiomarina loihiensis (strain ATCC BAA-735 / DSM 15497 / L2-TR)).